We begin with the raw amino-acid sequence, 369 residues long: Homoserine O-acetyltransferase (369 aa).

In terms of domain architecture, AB hydrolase-1 spans 44–350; the sequence is NAILVAHAWT…AYGHDAFLLE (307 aa). The active-site Nucleophile is Ser-150. Residue Arg-217 coordinates substrate. Catalysis depends on residues Asp-311 and His-344. Asp-345 is a substrate binding site.

The protein belongs to the AB hydrolase superfamily. MetX family. As to quaternary structure, homodimer.

It localises to the cytoplasm. It carries out the reaction L-homoserine + acetyl-CoA = O-acetyl-L-homoserine + CoA. The protein operates within amino-acid biosynthesis; L-methionine biosynthesis via de novo pathway; O-acetyl-L-homoserine from L-homoserine: step 1/1. Its function is as follows. Transfers an acetyl group from acetyl-CoA to L-homoserine, forming acetyl-L-homoserine. The sequence is that of Homoserine O-acetyltransferase from Geobacter metallireducens (strain ATCC 53774 / DSM 7210 / GS-15).